The following is a 122-amino-acid chain: LYR motif-containing protein 1 (122 aa).

Belongs to the complex I LYR family.

This Xenopus laevis (African clawed frog) protein is LYR motif-containing protein 1 (lyrm1).